Consider the following 340-residue polypeptide: NAC domain-containing protein 89 (340 aa).

In terms of domain architecture, NAC spans 21–164 (VFPGFKFSPT…AMVVCRVRRN (144 aa)). A DNA-binding region spans residues 119-170 (IGTKRTLVFHIGRAPKGERTDWIMHEYCVKGVSLDDAMVVCRVRRNKEYNSG). Over residues 167–181 (YNSGTSQKAPKPNSS) the composition is skewed to polar residues. Residues 167–198 (YNSGTSQKAPKPNSSAEKHAKVQNGATSSGSP) are disordered.

Interacts with PAS1.

The protein localises to the cytoplasm. It is found in the nucleus. Its function is as follows. Transcription factor involved in plant cell division. This chain is NAC domain-containing protein 89 (NAC089), found in Arabidopsis thaliana (Mouse-ear cress).